The sequence spans 227 residues: PKHD-type hydroxylase M446_1130 (227 aa).

The Fe2OG dioxygenase domain occupies 78 to 178 (QIFPPLFNRY…RVASFFWLQS (101 aa)). Fe cation-binding residues include His-96, Asp-98, and His-159. A 2-oxoglutarate-binding site is contributed by Arg-169.

The cofactor is Fe(2+). L-ascorbate is required as a cofactor.

This Methylobacterium sp. (strain 4-46) protein is PKHD-type hydroxylase M446_1130.